A 1486-amino-acid chain; its full sequence is Chromosome partition protein MukB (1486 aa).

34–41 (GGNGAGKS) is an ATP binding site. 3 coiled-coil regions span residues 326-418 (LEAD…QYNQ), 444-480 (LETF…QAYQ), and 509-603 (RHLA…RAPV). The segment at 666 to 783 (PGGSEDQRLN…EVPLFGRAAR (118 aa)) is flexible hinge. 3 coiled-coil regions span residues 835–923 (EAEI…AKLE), 977–1115 (EMLS…TAKA), and 1209–1266 (VEAI…QNVS).

This sequence belongs to the SMC family. MukB subfamily. Homodimerization via its hinge domain. Binds to DNA via its C-terminal region. Interacts, and probably forms a ternary complex, with MukE and MukF via its C-terminal region. The complex formation is stimulated by calcium or magnesium. Interacts with tubulin-related protein FtsZ.

The protein resides in the cytoplasm. The protein localises to the nucleoid. Functionally, plays a central role in chromosome condensation, segregation and cell cycle progression. Functions as a homodimer, which is essential for chromosome partition. Involved in negative DNA supercoiling in vivo, and by this means organize and compact chromosomes. May achieve or facilitate chromosome segregation by condensation DNA from both sides of a centrally located replisome during cell division. The chain is Chromosome partition protein MukB from Escherichia coli O9:H4 (strain HS).